Reading from the N-terminus, the 359-residue chain is MENPRTTPTPTPLRRRRSERRARGGRVLTALTGVTLLAGLAIAPAATGASPSPAPPASPAPSADSGTADAGTTALPSMELYRAEAGVHAWLDANPGDHRAPLIAERIGSQPQAVWFAGAYNPGTITQQVAEVTSAAAAAGQLPVVVPYMIPFRDCGNHSGGGAPSFAAYAEWSGLFAAGLGSEPVVVVLEPDAIPLIDCLDNQQRAERLAALAGLAEAVTDANPEARVYYDVGHSAWHAPAAIAPTLVEAGILEHGAGIATNISNYRTTTDETAYASAVIAELGGGLGAVVDTSRNGNGPLGSEWCDPPGRLVGNNPTVNPGVPGVDAFLWIKLPGELDGCDGPVGSFSPAKAYELAGG.

2 disordered regions span residues 1–26 and 47–72; these read MENP…RGGR and TGAS…DAGT. The span at 13-24 shows a compositional bias: basic residues; that stretch reads LRRRRSERRARG. The span at 60–72 shows a compositional bias: low complexity; sequence APSADSGTADAGT. Residue Asp154 is part of the active site. An intrachain disulfide couples Cys155 to Cys199. The active-site Proton donor is the Asp192. Residue Asp339 is the Nucleophile of the active site.

It belongs to the glycosyl hydrolase 6 (cellulase B) family.

It carries out the reaction Endohydrolysis of (1-&gt;4)-beta-D-glucosidic linkages in cellulose, lichenin and cereal beta-D-glucans.. CMCase I preferentially hydrolyzes carboxymethyl cellulose (CMC). The chain is Endoglucanase 1 (casA) from Streptomyces sp. (strain KSM-9).